The sequence spans 411 residues: Carbohydrate sulfotransferase 1 (411 aa).

Position 1 (Met1) is a topological domain, cytoplasmic. A helical; Signal-anchor for type II membrane protein transmembrane segment spans residues 2 to 23 (QCSWKAVLLLALASIAIQYTAI). Topologically, residues 24 to 411 (RTFTAKSFHT…VEERDFRPFL (388 aa)) are lumenal. Asn56 is a glycosylation site (N-linked (GlcNAc...) asparagine). 69–75 (TRSGSSF) is a 3'-phosphoadenylyl sulfate binding site. N-linked (GlcNAc...) asparagine glycans are attached at residues Asn145 and Asn189. Position 234 to 242 (234 to 242 (RDPRGILAS)) interacts with 3'-phosphoadenylyl sulfate. Asn334 carries N-linked (GlcNAc...) asparagine glycosylation. A Cell attachment site motif is present at residues 337-339 (RGD).

This sequence belongs to the sulfotransferase 1 family. Gal/GlcNAc/GalNAc subfamily.

Its subcellular location is the golgi apparatus membrane. It catalyses the reaction 3'-phosphoadenylyl sulfate + keratan = adenosine 3',5'-bisphosphate + keratan 6'-sulfate.. Its pathway is glycan metabolism. In terms of biological role, sulfotransferase that utilizes 3'-phospho-5'-adenylyl sulfate (PAPS) as sulfonate donor to catalyze the transfer of sulfate to position 6 of internal galactose (Gal) residues of keratan. Cooperates with B4GALT4 and B3GNT7 glycosyltransferases and CHST6 sulfotransferase to construct and elongate disulfated disaccharide unit [-&gt;3(6-sulfoGalbeta)1-&gt;4(6-sulfoGlcNAcbeta)1-&gt;] within keratan sulfate polymer. Has a preference for sulfating keratan sulfate, but it also transfers sulfate to the unsulfated polymer. Involved in biosynthesis of phosphacan, a major keratan sulfate proteoglycan in the developing brain. Involved in biosynthesis of 6-sulfoGalbeta-containing O-linked glycans in high endothelial venules of lymph nodes. May act in a synergistic manner with CHST4 to generate sialyl 6',6-disulfo Lewis X motif, a recognition determinant for immune cell receptors implicated in leukocyte trafficking. Catalyzes sulfation of N-acetyllactosamine (LacNAc) oligosaccharides with highest efficiency for sialylated LacNAc structures. This Rattus norvegicus (Rat) protein is Carbohydrate sulfotransferase 1 (Chst1).